The sequence spans 357 residues: UDP-3-O-acylglucosamine N-acyltransferase (357 aa).

The Proton acceptor role is filled by H251.

The protein belongs to the transferase hexapeptide repeat family. LpxD subfamily. In terms of assembly, homotrimer.

It catalyses the reaction a UDP-3-O-[(3R)-3-hydroxyacyl]-alpha-D-glucosamine + a (3R)-hydroxyacyl-[ACP] = a UDP-2-N,3-O-bis[(3R)-3-hydroxyacyl]-alpha-D-glucosamine + holo-[ACP] + H(+). It functions in the pathway bacterial outer membrane biogenesis; LPS lipid A biosynthesis. Its function is as follows. Catalyzes the N-acylation of UDP-3-O-acylglucosamine using 3-hydroxyacyl-ACP as the acyl donor. Is involved in the biosynthesis of lipid A, a phosphorylated glycolipid that anchors the lipopolysaccharide to the outer membrane of the cell. The sequence is that of UDP-3-O-acylglucosamine N-acyltransferase from Ralstonia pickettii (strain 12J).